A 207-amino-acid chain; its full sequence is Thiamine-phosphate synthase (207 aa).

4-amino-2-methyl-5-(diphosphooxymethyl)pyrimidine-binding positions include 41 to 45 (QLRLK) and Asn73. Mg(2+) is bound by residues Asp74 and Asp93. Thr111 contacts 4-amino-2-methyl-5-(diphosphooxymethyl)pyrimidine. 2-[(2R,5Z)-2-carboxy-4-methylthiazol-5(2H)-ylidene]ethyl phosphate is bound at residue 138–140 (TKT). Residue Lys141 participates in 4-amino-2-methyl-5-(diphosphooxymethyl)pyrimidine binding. Gly168 lines the 2-[(2R,5Z)-2-carboxy-4-methylthiazol-5(2H)-ylidene]ethyl phosphate pocket.

This sequence belongs to the thiamine-phosphate synthase family. Mg(2+) serves as cofactor.

The enzyme catalyses 2-[(2R,5Z)-2-carboxy-4-methylthiazol-5(2H)-ylidene]ethyl phosphate + 4-amino-2-methyl-5-(diphosphooxymethyl)pyrimidine + 2 H(+) = thiamine phosphate + CO2 + diphosphate. The catalysed reaction is 2-(2-carboxy-4-methylthiazol-5-yl)ethyl phosphate + 4-amino-2-methyl-5-(diphosphooxymethyl)pyrimidine + 2 H(+) = thiamine phosphate + CO2 + diphosphate. It carries out the reaction 4-methyl-5-(2-phosphooxyethyl)-thiazole + 4-amino-2-methyl-5-(diphosphooxymethyl)pyrimidine + H(+) = thiamine phosphate + diphosphate. Its pathway is cofactor biosynthesis; thiamine diphosphate biosynthesis; thiamine phosphate from 4-amino-2-methyl-5-diphosphomethylpyrimidine and 4-methyl-5-(2-phosphoethyl)-thiazole: step 1/1. Its function is as follows. Condenses 4-methyl-5-(beta-hydroxyethyl)thiazole monophosphate (THZ-P) and 2-methyl-4-amino-5-hydroxymethyl pyrimidine pyrophosphate (HMP-PP) to form thiamine monophosphate (TMP). The chain is Thiamine-phosphate synthase from Pelagibacter ubique (strain HTCC1062).